Consider the following 132-residue polypeptide: MKPQPFTLELSNCQLRHDGGAADKDEVRMVNVRWIDGFMVNSVSNENAGYLANTRADGASHIFLALSTNDNNTLNKSNKIVPADPQQNRVPLVEKAVDGGIFTYYIGYVTPAPEKATSGPLTSWATWELVYN.

The protein localises to the fimbrium. Appears to affect the stability of the intact fimbriae on the cell surface. The protein is Protein MrkF (mrkF) of Klebsiella pneumoniae.